The sequence spans 265 residues: DNA repair protein RecO (265 aa).

This sequence belongs to the RecO family.

Involved in DNA repair and RecF pathway recombination. The chain is DNA repair protein RecO from Mycobacterium ulcerans (strain Agy99).